The following is a 92-amino-acid chain: Large ribosomal subunit protein bL28 (92 aa).

The protein belongs to the bacterial ribosomal protein bL28 family.

This is Large ribosomal subunit protein bL28 from Borrelia garinii subsp. bavariensis (strain ATCC BAA-2496 / DSM 23469 / PBi) (Borreliella bavariensis).